The chain runs to 177 residues: Large ribosomal subunit protein uL6 (177 aa).

This sequence belongs to the universal ribosomal protein uL6 family. As to quaternary structure, part of the 50S ribosomal subunit.

Functionally, this protein binds to the 23S rRNA, and is important in its secondary structure. It is located near the subunit interface in the base of the L7/L12 stalk, and near the tRNA binding site of the peptidyltransferase center. This is Large ribosomal subunit protein uL6 from Citrobacter koseri (strain ATCC BAA-895 / CDC 4225-83 / SGSC4696).